The chain runs to 349 residues: MDTIAARALTVMRACATLQEARIVLEANVMEILGIAINRYNGLTLRGVTMRPTSLAQRNEMFFMCLDMMLSATGINVGPISPDYTQHMATIGVLATPEIPFTTEAANEIARVTGETSTWGPARQPYGFFLETEETFQPGRWFMRAAQAVTAVVCGPDMIQVSLNAGARGDVQQIFQGRNDPMMIYLVWRRIENFAMAQGNSQQTQAGVTVSVGGVDMRAGRIIAWDGQAALHVHNPTQQNAMVQIQVVFYISMDKTLNQYPALTAEIFNVYSFRDHTWHGLRTAILNRTTLPNMLPPIFPPNDRDSILTLLPLSTLADVYTVLRPEFAIHGVNPMPGPLTRAIARAAYV.

The N-linked (GlcNAc...) asparagine; by host glycan is linked to Asn287.

This sequence belongs to the orbivirus VP7 family. In terms of assembly, homotrimer that assemble in a complex of 260 capsomers on an inner scaffold composed of VP3.

It localises to the virion. Functionally, the VP7 protein is one of the five proteins (with VP1, VP3, VP4, and VP6) which form the inner capsid of the virus. The chain is Core protein VP7 (Segment-7) from Antilocapra americana (Pronghorn).